A 206-amino-acid polypeptide reads, in one-letter code: Large ribosomal subunit protein uL4 (206 aa).

Positions 48–97 are disordered; sequence THAVKNRSLVSGGGKKPWKQKHTGRARQGSTRASQWVGGGKAMGPKPRDY. The segment covering 63–72 has biased composition (basic residues); it reads KPWKQKHTGR.

The protein belongs to the universal ribosomal protein uL4 family. As to quaternary structure, part of the 50S ribosomal subunit.

One of the primary rRNA binding proteins, this protein initially binds near the 5'-end of the 23S rRNA. It is important during the early stages of 50S assembly. It makes multiple contacts with different domains of the 23S rRNA in the assembled 50S subunit and ribosome. Functionally, forms part of the polypeptide exit tunnel. This Anaeromyxobacter sp. (strain K) protein is Large ribosomal subunit protein uL4.